The following is a 511-amino-acid chain: Bifunctional purine biosynthesis protein PurH (511 aa).

In terms of domain architecture, MGS-like spans 1–145 (MKKRALVSVS…KNHKFVSVIV (145 aa)).

It belongs to the PurH family.

It catalyses the reaction (6R)-10-formyltetrahydrofolate + 5-amino-1-(5-phospho-beta-D-ribosyl)imidazole-4-carboxamide = 5-formamido-1-(5-phospho-D-ribosyl)imidazole-4-carboxamide + (6S)-5,6,7,8-tetrahydrofolate. The catalysed reaction is IMP + H2O = 5-formamido-1-(5-phospho-D-ribosyl)imidazole-4-carboxamide. Its pathway is purine metabolism; IMP biosynthesis via de novo pathway; 5-formamido-1-(5-phospho-D-ribosyl)imidazole-4-carboxamide from 5-amino-1-(5-phospho-D-ribosyl)imidazole-4-carboxamide (10-formyl THF route): step 1/1. It participates in purine metabolism; IMP biosynthesis via de novo pathway; IMP from 5-formamido-1-(5-phospho-D-ribosyl)imidazole-4-carboxamide: step 1/1. This Bacillus cereus (strain Q1) protein is Bifunctional purine biosynthesis protein PurH.